We begin with the raw amino-acid sequence, 193 residues long: Protein hunchback (193 aa).

2 disordered regions span residues 16–126 and 146–193; these read SHHH…ATTT and SNDK…KYMA. Over residues 17–31 the composition is skewed to basic residues; it reads HHHHHHHAHHSHHQH. Low complexity-rich tracts occupy residues 35–46 and 56–77; these read SNSNSNASSPHQ and SSNN…QQQQ. Residues 89–99 are compositionally biased toward polar residues; the sequence is PSPSNNDQNSR. A compositionally biased stretch (basic and acidic residues) spans 174 to 193; that stretch reads EPEKEHDLMSNSSEDMKYMA.

The protein belongs to the hunchback C2H2-type zinc-finger protein family.

It is found in the nucleus. In terms of biological role, gap class segmentation protein that controls development of head structures. This Drosophila iki (Fruit fly) protein is Protein hunchback (hb).